The following is a 250-amino-acid chain: Small ribosomal subunit protein uS3 (250 aa).

In terms of domain architecture, KH type-2 spans 39–111 (IRPLIKNHYP…KVQINIFEVK (73 aa)).

It belongs to the universal ribosomal protein uS3 family. Part of the 30S ribosomal subunit. Forms a tight complex with proteins S10 and S14.

Functionally, binds the lower part of the 30S subunit head. Binds mRNA in the 70S ribosome, positioning it for translation. This chain is Small ribosomal subunit protein uS3, found in Ziziphus jujuba witches'-broom phytoplasma.